Consider the following 206-residue polypeptide: Ephrin-A4 (206 aa).

A signal peptide spans 1–25; that stretch reads MRLLPLLRTVLWAALLGSRLPGCSS. Residues 26–158 enclose the Ephrin RBD domain; that stretch reads LRHPIYWNSS…RLQVSVCCKE (133 aa). N-linked (GlcNAc...) asparagine glycosylation occurs at Asn-33. Residues 41 to 43 carry the Cell attachment site motif; it reads RGD. Intrachain disulfides connect Cys-58/Cys-99 and Cys-86/Cys-147. Asn-98 carries an N-linked (GlcNAc...) asparagine glycan. The segment at 161–180 is disordered; the sequence is SSHESAHPVGSPGESGTSGW. The GPI-anchor amidated serine moiety is linked to residue Ser-175. Positions 176–206 are cleaved as a propeptide — removed in mature form; the sequence is GTSGWRGGHAPSPLCLLLLLLLPILRLLRVL.

It belongs to the ephrin family. As to expression, expressed in myogenic progenitor cells.

Its subcellular location is the cell membrane. Cell surface GPI-bound ligand for Eph receptors, a family of receptor tyrosine kinases which are crucial for migration, repulsion and adhesion during neuronal, vascular and epithelial development. Binds promiscuously Eph receptors residing on adjacent cells, leading to contact-dependent bidirectional signaling into neighboring cells. May play a role in the interaction between activated B-lymphocytes and dendritic cells in tonsils. The protein is Ephrin-A4 (Efna4) of Mus musculus (Mouse).